The following is a 764-amino-acid chain: Complement factor B (764 aa).

The N-terminal stretch at 1–25 (MGSNLSPQLCLMPFILGLLSGGVTT) is a signal peptide. Sushi domains follow at residues 35-100 (GSCS…ECRA), 101-160 (IHCP…ICDN), and 163-220 (GYCS…SCQD). 6 disulfide bridges follow: C37/C76, C62/C98, C103/C145, C131/C158, C165/C205, and C191/C218. 2 N-linked (GlcNAc...) asparagine glycosylation sites follow: N122 and N142. The VWFA domain occupies 270–469 (NIYLVLDGSD…NLEDVFYQMI (200 aa)). Residues S278 and S280 each coordinate Mg(2+). S278 and S280 together coordinate Mn(2+). An N-linked (GlcNAc...) asparagine glycan is attached at N285. An N-linked (Glc) (glycation) lysine glycan is attached at K291. A Mg(2+)-binding site is contributed by T353. T353 lines the Mn(2+) pocket. N378 is a glycosylation site (N-linked (GlcNAc...) asparagine). One can recognise a Peptidase S1 domain in the interval 477–757 (LCGMVWEHRK…VLPWLKEKLQ (281 aa)). 5 disulfides stabilise this stretch: C478-C596, C511-C527, C599-C615, C656-C682, and C695-C725. Residues H526 and D576 each act as charge relay system in the active site. The active-site Charge relay system is the S699.

It belongs to the peptidase S1 family. In terms of assembly, monomer. Interacts with complement C3b; this interaction is dependent on the presence of Mg(2+). As to quaternary structure, catalytic component of the C3 convertase of the alternative complement pathway, also named C3bBb, composed of complement factor B Bb and complement C3b. Catalytic component of the C5 convertase of the alternative complement pathway, also named C3bBb3b, composed of complement factor B Bb and additional molecules of complement C3b. Interacts to CFP; this interaction contributes to the stabilization of the active C3-convertase enzyme complex. The cofactor is Mg(2+). It depends on Mn(2+) as a cofactor. Post-translationally, cleaved by CFD following activation of the alternative complement system, generating Ba and Bb chains. Cleavage and activation takes place when CFB is already associated with complement C3b.

The protein localises to the secreted. It is found in the cell surface. The enzyme catalyses Cleavage of Arg-|-Ser bond in complement component C3 alpha-chain to yield C3a and C3b, and Arg-|-Xaa bond in complement component C5 alpha-chain to yield C5a and C5b.. Its function is as follows. Precursor of the catalytic component of the C3 and C5 convertase complexes of the alternative pathway of the complement system, a cascade of proteins that leads to phagocytosis and breakdown of pathogens and signaling that strengthens the adaptive immune system. The alternative complement pathway acts as an amplification loop that enhances other complement pathways (classical, lectin and GZMK) by promoting formation of additional C3 and C5 convertases. CFB is cleaved and activated by CFD to generate Ba and Bb chains; Bb chain constituting the catalytic component of the C3 and C5 convertases. Functionally, serine protease component of the complement C3 and C5 convertase complexes of the alternative complement pathway. Following cleavage and activation by factor D (CFD), forms the C3 convertase together with complement C3b. As part of the C3 convertase, cleaves and activates C3 into C3a anaphylatoxin and C3b opsonin, the next components of the complement pathways. When an additional complement C3b molecule binds to the C3 convertase, forms the C5 convertase, which cleaves and activates C5 into C5a anaphylatoxin and C5b component of the membrane attack complex. Involved in proliferation and differentiation of preactivated B-lymphocytes, rapid spreading of peripheral blood monocytes, stimulation of lymphocyte blastogenesis and lysis of erythrocytes. In Homo sapiens (Human), this protein is Complement factor B.